Here is a 397-residue protein sequence, read N- to C-terminus: MSASIYLVKGREKSLLRRHPWIFSKGIERVQGNPIDGDTVEIYTQDGKWLARGAWSGSSQIRARVWTFDKEETVDLDFFIRRLKYAQESRDGLIKRQGLTGYRLCAAESDGLPGLTIDRYADFLVCQILSAGAEFQRDLITQALRTLYPECSIYERSDVAVRKKEGLKERTGVIYGETPTEPVVIEENGGVKILVDIRNGHKTGFYLDQRDNRQAAAKYTEGKRVLNCFCYTGGFGVYALKGGAKEVVNVDLSQNALDIARQNAELNGLDTSNTQFVRHDVFKLLREYREKGDKFDVIVLDPPKFAESKAQLLGACRGYKDINMLAFQLLAPGGVLLTYSCSGLMEQSLFQKIVADAALDAGRDAQILELLSQASDHPIGTAYPEGFYLKGLVVRAR.

In terms of domain architecture, PUA spans 2–79; sequence SASIYLVKGR…KEETVDLDFF (78 aa).

Belongs to the methyltransferase superfamily. RlmI family.

Its subcellular location is the cytoplasm. The enzyme catalyses cytidine(1962) in 23S rRNA + S-adenosyl-L-methionine = 5-methylcytidine(1962) in 23S rRNA + S-adenosyl-L-homocysteine + H(+). Its function is as follows. Specifically methylates the cytosine at position 1962 (m5C1962) of 23S rRNA. The chain is Ribosomal RNA large subunit methyltransferase I from Aeromonas hydrophila subsp. hydrophila (strain ATCC 7966 / DSM 30187 / BCRC 13018 / CCUG 14551 / JCM 1027 / KCTC 2358 / NCIMB 9240 / NCTC 8049).